Here is an 88-residue protein sequence, read N- to C-terminus: Translation initiation factor IF-1 3 (88 aa).

Residues 1–72 enclose the S1-like domain; it reads MAKEELLELD…TKGCINFRHK (72 aa).

It belongs to the IF-1 family. Component of the 30S ribosomal translation pre-initiation complex which assembles on the 30S ribosome in the order IF-2 and IF-3, IF-1 and N-formylmethionyl-tRNA(fMet); mRNA recruitment can occur at any time during PIC assembly.

It localises to the cytoplasm. Its function is as follows. One of the essential components for the initiation of protein synthesis. Stabilizes the binding of IF-2 and IF-3 on the 30S subunit to which N-formylmethionyl-tRNA(fMet) subsequently binds. Helps modulate mRNA selection, yielding the 30S pre-initiation complex (PIC). Upon addition of the 50S ribosomal subunit IF-1, IF-2 and IF-3 are released leaving the mature 70S translation initiation complex. This is Translation initiation factor IF-1 3 from Burkholderia orbicola (strain AU 1054).